The primary structure comprises 203 residues: Endo-type membrane-bound lytic murein transglycosylase A (203 aa).

Residues 1–15 (MKLRWFAFLVVLLAG) form the signal peptide. Cys16 carries the N-palmitoyl cysteine lipid modification. A lipid anchor (S-diacylglycerol cysteine) is attached at Cys16.

Belongs to the transglycosylase Slt family.

The protein localises to the cell outer membrane. It carries out the reaction Endolytic cleavage of the (1-&gt;4)-beta-glycosidic linkage between N-acetylmuramic acid (MurNAc) and N-acetylglucosamine (GlcNAc) residues in peptidoglycan with concomitant formation of a 1,6-anhydrobond in the MurNAc residue.. Its function is as follows. Murein-degrading enzyme. May play a role in recycling of muropeptides during cell elongation and/or cell division. Preferentially cleaves at a distance of more than two disaccharide units from the ends of the glycan chain. The sequence is that of Endo-type membrane-bound lytic murein transglycosylase A from Citrobacter koseri (strain ATCC BAA-895 / CDC 4225-83 / SGSC4696).